Here is a 570-residue protein sequence, read N- to C-terminus: A-type ATP synthase subunit A (570 aa).

Position 223–230 (Gly223–Thr230) interacts with ATP.

The protein belongs to the ATPase alpha/beta chains family. In terms of assembly, has multiple subunits with at least A(3), B(3), C, D, E, F, H, I and proteolipid K(x).

Its subcellular location is the cell membrane. The catalysed reaction is ATP + H2O + 4 H(+)(in) = ADP + phosphate + 5 H(+)(out). Functionally, component of the A-type ATP synthase that produces ATP from ADP in the presence of a proton gradient across the membrane. The A chain is the catalytic subunit. This Nanoarchaeum equitans (strain Kin4-M) protein is A-type ATP synthase subunit A.